The sequence spans 65 residues: Alpha-toxin Bot1 (65 aa).

The LCN-type CS-alpha/beta domain maps to 2–64; the sequence is RDAYIAQPEN…VPIRIPGKCH (63 aa). Disulfide bonds link Cys-12–Cys-63, Cys-16–Cys-36, Cys-22–Cys-46, and Cys-26–Cys-48. A Phenylalanine amide modification is found at Phe-65.

It belongs to the long (4 C-C) scorpion toxin superfamily. Sodium channel inhibitor family. Alpha subfamily. Expressed by the venom gland.

The protein resides in the secreted. Functionally, alpha toxins bind voltage-independently at site-3 of sodium channels (Nav) and inhibit the inactivation of the activated channels, thereby blocking neuronal transmission. This chain is Alpha-toxin Bot1, found in Buthus occitanus tunetanus (Common European scorpion).